The chain runs to 463 residues: Phosphoglucosamine mutase (463 aa).

The Phosphoserine intermediate role is filled by Ser-102. Residues Ser-102, Asp-240, Asp-242, and Asp-244 each contribute to the Mg(2+) site. Ser-102 is subject to Phosphoserine.

It belongs to the phosphohexose mutase family. The cofactor is Mg(2+). In terms of processing, activated by phosphorylation.

It carries out the reaction alpha-D-glucosamine 1-phosphate = D-glucosamine 6-phosphate. Its function is as follows. Catalyzes the conversion of glucosamine-6-phosphate to glucosamine-1-phosphate. This is Phosphoglucosamine mutase from Mycobacterium leprae (strain Br4923).